The sequence spans 766 residues: 5-methyltetrahydropteroyltriglutamate--homocysteine methyltransferase 1 (766 aa).

Positions 18 and 116 each coordinate 5-methyltetrahydropteroyltri-L-glutamate. L-homocysteine is bound by residues 438-440 (IGS) and Glu-491. L-methionine-binding positions include 438–440 (IGS) and Glu-491. Residues Asp-496, Tyr-519, 522–523 (RC), and Trp-568 each bind 5-methyltetrahydropteroyltri-L-glutamate. Position 606 (Asp-606) interacts with L-homocysteine. Residue Asp-606 participates in L-methionine binding. 4 residues coordinate Zn(2+): His-648, Cys-650, His-659, and Glu-672. His-702 acts as the Proton donor in catalysis. Residue Cys-734 coordinates Zn(2+).

It belongs to the vitamin-B12 independent methionine synthase family. Requires Zn(2+) as cofactor.

It is found in the cytoplasm. It localises to the cytosol. The catalysed reaction is 5-methyltetrahydropteroyltri-L-glutamate + L-homocysteine = tetrahydropteroyltri-L-glutamate + L-methionine. It functions in the pathway amino-acid biosynthesis; L-methionine biosynthesis via de novo pathway; L-methionine from L-homocysteine (MetE route): step 1/1. In terms of biological role, catalyzes the transfer of a methyl group from 5-methyltetrahydrofolate to homocysteine resulting in methionine formation. The sequence is that of 5-methyltetrahydropteroyltriglutamate--homocysteine methyltransferase 1 from Oryza sativa subsp. japonica (Rice).